A 71-amino-acid chain; its full sequence is Small ribosomal subunit protein bS21 (71 aa).

The interval 39 to 71 is disordered; that stretch reads EKPTQERKRKAAAAVKRQMRRTSRDVTKRKRLY. The segment covering 45 to 71 has biased composition (basic residues); that stretch reads RKRKAAAAVKRQMRRTSRDVTKRKRLY.

Belongs to the bacterial ribosomal protein bS21 family.

The sequence is that of Small ribosomal subunit protein bS21 from Xylella fastidiosa (strain M12).